Consider the following 675-residue polypeptide: Methionine--tRNA ligase (675 aa).

The 'HIGH' region motif lies at 15–25 (PYANGSIHLGH). Positions 146, 149, 159, and 162 each coordinate Zn(2+). A 'KMSKS' region motif is present at residues 332-336 (KMSKS). Residue lysine 335 coordinates ATP. One can recognise a tRNA-binding domain in the interval 573–675 (DFAKVDMRIA…SGAQPGMQVK (103 aa)).

The protein belongs to the class-I aminoacyl-tRNA synthetase family. MetG type 1 subfamily. As to quaternary structure, homodimer. Requires Zn(2+) as cofactor.

The protein localises to the cytoplasm. It catalyses the reaction tRNA(Met) + L-methionine + ATP = L-methionyl-tRNA(Met) + AMP + diphosphate. Is required not only for elongation of protein synthesis but also for the initiation of all mRNA translation through initiator tRNA(fMet) aminoacylation. The protein is Methionine--tRNA ligase of Yersinia pseudotuberculosis serotype I (strain IP32953).